The sequence spans 151 residues: Macrodomain Ter protein (151 aa).

It belongs to the MatP family. In terms of assembly, homodimer.

The protein localises to the cytoplasm. In terms of biological role, required for spatial organization of the terminus region of the chromosome (Ter macrodomain) during the cell cycle. Prevents early segregation of duplicated Ter macrodomains during cell division. Binds specifically to matS, which is a 13 bp signature motif repeated within the Ter macrodomain. This chain is Macrodomain Ter protein, found in Cronobacter sakazakii (strain ATCC BAA-894) (Enterobacter sakazakii).